A 326-amino-acid polypeptide reads, in one-letter code: Macrosialin (326 aa).

The N-terminal stretch at 1-20 (MRLPVCLILLGPLIAQGTEE) is a signal peptide. The tract at residues 21–109 (DCPHKKAVTL…ATSPRSSTVG (89 aa)) is mucin-like. Residues 21 to 291 (DCPHKKAVTL…PCFSCNRDQS (271 aa)) are Extracellular-facing. The segment covering 38 to 58 (PTATESTASPTTSHRPTTTSH) has biased composition (low complexity). The segment at 38 to 129 (PTATESTASP…SPRSKGALGN (92 aa)) is disordered. A run of 4 repeats spans residues 44–49 (TASPTT), 50–64 (SHRP…VTVH), 65–72 (TSSGPTTV), and 73–88 (THNP…ATIS). Residues 59-69 (GNVTVHTSSGP) show a composition bias toward polar residues. Asn-60 is a glycosylation site (N-linked (GlcNAc...) asparagine). Residues 70–80 (TTVTHNPATTT) are compositionally biased toward low complexity. Over residues 81 to 108 (SHGNATISHATVSPTTNGTATSPRSSTV) the composition is skewed to polar residues. N-linked (GlcNAc...) asparagine glycosylation is found at Asn-84 and Asn-97. Residues 111–120 (HPGPPPPSPS) are compositionally biased toward pro residues. Residues Asn-129, Asn-134, Asn-169, Asn-218, Asn-233, and Asn-251 are each glycosylated (N-linked (GlcNAc...) asparagine). Cys-139 and Cys-177 are disulfide-bonded. The cysteines at positions 249 and 286 are disulfide-linked. A helical membrane pass occupies residues 292-316 (LLLPLIIGLVLLGLLTLVLIAFCIT). Over 317-326 (RRRQSTYQPL) the chain is Cytoplasmic.

It belongs to the LAMP family. Post-translationally, N- and O-glycosylated. Expressed in tissue macrophages and to a lesser extent in dendritic cells.

It is found in the endosome membrane. It localises to the lysosome membrane. The protein localises to the cell membrane. Functionally, could play a role in phagocytic activities of tissue macrophages, both in intracellular lysosomal metabolism and extracellular cell-cell and cell-pathogen interactions. Binds to tissue- and organ-specific lectins or selectins, allowing homing of macrophage subsets to particular sites. Rapid recirculation of CD68 from endosomes and lysosomes to the plasma membrane may allow macrophages to crawl over selectin-bearing substrates or other cells. The protein is Macrosialin (Cd68) of Mus musculus (Mouse).